Consider the following 124-residue polypeptide: Magnetosome protein MamC (124 aa).

The Cytoplasmic segment spans residues 2–8 (PFHLAPY). Residues 9–29 (LAKSVPGVGVLGALVGGAAAL) traverse the membrane as a helical segment. Topologically, residues 30–64 (AKNVRLLKEKRITNTEAAIDTGKETVGAGLATALS) are lumenal. Positions 36 to 56 (LKEKRITNTEAAIDTGKETVG) are MIC, when fused with the C-terminus of maltose-binding protein (MBP) or expressed as a fragment, improves quality of iron particles during precipitation experiments, binds magnetite. The chain crosses the membrane as a helical span at residues 65–85 (AVAATAVGGGLVVSLGTALVA). The Cytoplasmic segment spans residues 86 to 124 (GVAAKYAWDRGVDLVEKELNRGKAANGASDEDILRDELA).

Belongs to the magnetosome MamC family. In terms of assembly, probably interacts with MamA.

The protein localises to the magnetosome membrane. Probably involved in magnetite crystal growth. The lumenal domain may bind the magnetite crystals, affecting crystal size and shape. This is Magnetosome protein MamC from Paramagnetospirillum magneticum (strain ATCC 700264 / AMB-1) (Magnetospirillum magneticum).